The sequence spans 193 residues: UMP-CMP kinase (193 aa).

Residue 13–18 (GAGKGT) coordinates ATP. Residues 33–63 (SAGDLLRDERKKPDSQYGELIESYIRDGKIV) are NMP. A ribonucleoside 5'-phosphate-binding positions include R39, 61–63 (KIV), and 93–96 (GFPR). N100 contacts CMP. Positions 133–143 (ERGKSSGRSDD) are LID. Residue R134 coordinates ATP. Residues R140 and R151 each contribute to the a ribonucleoside 5'-phosphate site. ATP is bound at residue K179.

It belongs to the adenylate kinase family. UMP-CMP kinase subfamily. As to quaternary structure, monomer. The cofactor is Mg(2+).

It localises to the nucleus. It is found in the cytoplasm. It catalyses the reaction CMP + ATP = CDP + ADP. The catalysed reaction is dCMP + ATP = dCDP + ADP. The enzyme catalyses UMP + ATP = UDP + ADP. It carries out the reaction a 2'-deoxyribonucleoside 5'-diphosphate + ATP = a 2'-deoxyribonucleoside 5'-triphosphate + ADP. It catalyses the reaction a ribonucleoside 5'-diphosphate + ATP = a ribonucleoside 5'-triphosphate + ADP. In terms of biological role, catalyzes the phosphorylation of pyrimidine nucleoside monophosphates at the expense of ATP. Plays an important role in de novo pyrimidine nucleotide biosynthesis. Has preference for UMP and CMP as phosphate acceptors. Also displays broad nucleoside diphosphate kinase activity. This is UMP-CMP kinase (cmpk1) from Xenopus laevis (African clawed frog).